The sequence spans 332 residues: Cinnamoyl-CoA reductase 2 (332 aa).

Residues 12–18 (GAGGYIA), Arg-37, Lys-43, 63–64 (DL), 83–85 (TAS), Tyr-156, Lys-160, 183–186 (PVLV), and Ser-198 each bind NADP(+). A disulfide bond links Cys-149 and Cys-157. The active-site Proton donor is the Lys-160.

The protein belongs to the NAD(P)-dependent epimerase/dehydratase family. Dihydroflavonol-4-reductase subfamily. Expressed at low levels in leaves, stems and flowers.

It catalyses the reaction (E)-cinnamaldehyde + NADP(+) + CoA = (E)-cinnamoyl-CoA + NADPH + H(+). It functions in the pathway aromatic compound metabolism; phenylpropanoid biosynthesis. Cinnamoyl-CoA reductase probably involved in the formation of phenolic compounds associated with the hypersensitive response. Seems not to be involved in lignin biosynthesis. This Arabidopsis thaliana (Mouse-ear cress) protein is Cinnamoyl-CoA reductase 2 (CCR2).